Consider the following 556-residue polypeptide: MGKNGRLRWNPFSHRSSSSTSSSSRQQQQEQQPPVEFLCPISKSVMSDPVVVSSGQTFERVCVQVCRDLNFIPKLNDDEESLPDFSNIIPNLNMKSTIDTWCDTVGVSRPQPPDYSTVERILRQQMPPPDVEIRVSEQELLRAVAHRAPMIIHHADSELMGRRDFNNSTTSSDESVIVAHSPFTPLPLTTRPACFSPSPSSSSSEIETLTHHTFFSNSTSTATEEDEVIYNKLKSSEIFDQEQGLIMMRKMTRTNDEARVSLCSPRILSLLKNMIVSRYSLVQTNALASLVNLSLDKKNKLTIVRLGFVPILIDVLKSGSREAQEHAAGTIFSLSLEDDNKMPIGVLGALQPLLHALRAAESDRTRHDSALALYHLTLNQTNRSKLVRLGAVPALFSMVRSGESASRALLVICNLACCSEGRSAMLDANAVAILVGKLREEWTEEPTEARSSSSARENCVAALFALSHESLRFKGLAKEARAVEVLKEVEERGTERAREKAKKILQLMRERVPEDDEEDGEGSIDWDRVIDSNGSIRSRFRVGGRNRVVTQNSSGF.

Positions 1–34 (MGKNGRLRWNPFSHRSSSSTSSSSRQQQQEQQPP) are disordered. The span at 13-32 (SHRSSSSTSSSSRQQQQEQQ) shows a compositional bias: low complexity. A U-box domain is found at 32–108 (QPPVEFLCPI…DTWCDTVGVS (77 aa)). 5 ARM repeats span residues 256-295 (DEAR…NLSL), 297-336 (KKNK…SLSL), 338-378 (DDNK…HLTL), 380-417 (QTNR…NLAC), and 418-468 (CSEG…ALSH).

As to quaternary structure, binds to SD16, SD17, SD18 and SD129.

It catalyses the reaction S-ubiquitinyl-[E2 ubiquitin-conjugating enzyme]-L-cysteine + [acceptor protein]-L-lysine = [E2 ubiquitin-conjugating enzyme]-L-cysteine + N(6)-ubiquitinyl-[acceptor protein]-L-lysine.. It participates in protein modification; protein ubiquitination. Its function is as follows. Functions as an E3 ubiquitin ligase. The polypeptide is U-box domain-containing protein 38 (PUB38) (Arabidopsis thaliana (Mouse-ear cress)).